We begin with the raw amino-acid sequence, 196 residues long: Anthranilate synthase component 2 (196 aa).

In terms of domain architecture, Glutamine amidotransferase type-1 spans 3 to 196 (VILIIDNYDS…RTVIRNFLRM (194 aa)). 60–62 (GPG) contacts L-glutamine. Cys89 functions as the Nucleophile; for GATase activity in the catalytic mechanism. Residues Gln93 and 138 to 139 (SL) each bind L-glutamine. Active-site for GATase activity residues include His177 and Glu179.

As to quaternary structure, heterotetramer consisting of two non-identical subunits: a beta subunit (TrpG) and a large alpha subunit (TrpE).

The catalysed reaction is chorismate + L-glutamine = anthranilate + pyruvate + L-glutamate + H(+). It participates in amino-acid biosynthesis; L-tryptophan biosynthesis; L-tryptophan from chorismate: step 1/5. Functionally, part of a heterotetrameric complex that catalyzes the two-step biosynthesis of anthranilate, an intermediate in the biosynthesis of L-tryptophan. In the first step, the glutamine-binding beta subunit (TrpG) of anthranilate synthase (AS) provides the glutamine amidotransferase activity which generates ammonia as a substrate that, along with chorismate, is used in the second step, catalyzed by the large alpha subunit of AS (TrpE) to produce anthranilate. In the absence of TrpG, TrpE can synthesize anthranilate directly from chorismate and high concentrations of ammonia. This chain is Anthranilate synthase component 2 (trpG), found in Methanothermobacter thermautotrophicus (strain ATCC 29096 / DSM 1053 / JCM 10044 / NBRC 100330 / Delta H) (Methanobacterium thermoautotrophicum).